Reading from the N-terminus, the 131-residue chain is Profilin-2 (131 aa).

This sequence belongs to the profilin family. Occurs in many kinds of cells as a complex with monomeric actin in a 1:1 ratio.

The protein resides in the cytoplasm. It localises to the cytoskeleton. Its function is as follows. Binds to actin and affects the structure of the cytoskeleton. At high concentrations, profilin prevents the polymerization of actin, whereas it enhances it at low concentrations. By binding to PIP2, it inhibits the formation of IP3 and DG. The polypeptide is Profilin-2 (Solanum lycopersicum (Tomato)).